The primary structure comprises 216 residues: Large ribosomal subunit protein uL24m (216 aa).

A mitochondrion-targeting transit peptide spans 1-9 (MRLSALLAL). Residue Ser-24 is modified to Phosphoserine. Residues 56-89 (LFCGDRVEILEGKDAGKQGKVVQVIRQRNWVVVE) form the KOW domain.

The protein belongs to the universal ribosomal protein uL24 family. As to quaternary structure, component of the mitochondrial ribosome large subunit (39S) which comprises a 16S rRNA and about 50 distinct proteins.

It localises to the mitochondrion. The chain is Large ribosomal subunit protein uL24m (MRPL24) from Bos taurus (Bovine).